The sequence spans 148 residues: Large-conductance mechanosensitive channel (148 aa).

The next 2 membrane-spanning stretches (helical) occupy residues Ala-9–Phe-29 and Ile-79–Ile-99.

Belongs to the MscL family. In terms of assembly, homopentamer.

The protein localises to the cell inner membrane. In terms of biological role, channel that opens in response to stretch forces in the membrane lipid bilayer. May participate in the regulation of osmotic pressure changes within the cell. In Pseudomonas savastanoi pv. phaseolicola (strain 1448A / Race 6) (Pseudomonas syringae pv. phaseolicola (strain 1448A / Race 6)), this protein is Large-conductance mechanosensitive channel.